Consider the following 156-residue polypeptide: Small ribosomal subunit protein uS7 (156 aa).

The protein belongs to the universal ribosomal protein uS7 family. As to quaternary structure, part of the 30S ribosomal subunit. Contacts proteins S9 and S11.

One of the primary rRNA binding proteins, it binds directly to 16S rRNA where it nucleates assembly of the head domain of the 30S subunit. Is located at the subunit interface close to the decoding center, probably blocks exit of the E-site tRNA. The sequence is that of Small ribosomal subunit protein uS7 from Paramagnetospirillum magneticum (strain ATCC 700264 / AMB-1) (Magnetospirillum magneticum).